Reading from the N-terminus, the 374-residue chain is S-adenosylmethionine synthase 2 (374 aa).

Glu-11 serves as a coordination point for Mg(2+). His-17 serves as a coordination point for ATP. Glu-45 is a binding site for K(+). Positions 58 and 101 each coordinate L-methionine. Residues 169–171 (DGK), 237–240 (SGRF), Asp-248, 254–255 (RK), Ala-271, Lys-275, and Lys-279 each bind ATP. Asp-248 is an L-methionine binding site. Lys-279 contributes to the L-methionine binding site.

It belongs to the AdoMet synthase family. As to quaternary structure, homotetramer. It depends on Mn(2+) as a cofactor. Mg(2+) serves as cofactor. Co(2+) is required as a cofactor. Requires K(+) as cofactor. As to expression, expressed in vegetative and reproductive tissues.

It localises to the cytoplasm. It catalyses the reaction L-methionine + ATP + H2O = S-adenosyl-L-methionine + phosphate + diphosphate. Its pathway is amino-acid biosynthesis; S-adenosyl-L-methionine biosynthesis; S-adenosyl-L-methionine from L-methionine: step 1/1. Its function is as follows. Catalyzes the formation of S-adenosylmethionine from methionine and ATP. The reaction comprises two steps that are both catalyzed by the same enzyme: formation of S-adenosylmethionine (AdoMet) and triphosphate, and subsequent hydrolysis of the triphosphate. This chain is S-adenosylmethionine synthase 2 (SAMS2), found in Pisum sativum (Garden pea).